A 366-amino-acid polypeptide reads, in one-letter code: ADP-ribosylarginine hydrolase Tri1 (366 aa).

An N-terminal extension region spans residues 1–65; sequence MIDLREDTWT…LNTPPCLIPE (65 aa). Positions 74 to 366 are ADP-ribosyl hydrolase domain; the sequence is GALVGLAIGD…LFYMAPEEDF (293 aa). Positions 116, 117, 118, 161, and 317 each coordinate Mg(2+).

It belongs to the ADP-ribosylglycohydrolase family. As to quaternary structure, forms a stable complex with cognate effector protein Tre1-Sp. Mg(2+) serves as cofactor.

It carries out the reaction N(omega)-(ADP-D-ribosyl)-L-arginyl-[protein] + H2O = ADP-D-ribose + L-arginyl-[protein]. Functionally, immunity component of a contact-dependent interbacterial competition system (also called effector-immunity systems). Acts as an arginine mono-ADP-ribosylhydrolase, mediating the removal of mono-ADP-ribose attached to arginine residues on proteins. De-ADP-ribosylates FtsZ, is able to act on other proteins as well. Neutralizes the toxic activity of cognate toxin Tre1-Sp. Expression of this protein alone in E.coli partially protects the cells against competition by wild-type S.proteamaculans. Neutralizes Tre1-Sp both by occluding its active site via its N-terminal extension and by hydrolyzing the ADP-ribosyl moiety from FtsZ; the 2 activities are dissociable by mutagenesis. The sequence is that of ADP-ribosylarginine hydrolase Tri1 from Serratia proteamaculans (strain 568).